Reading from the N-terminus, the 265-residue chain is Hydroxyethylthiazole kinase 2 (265 aa).

Met-39 serves as a coordination point for substrate. Residues Lys-115 and Thr-168 each contribute to the ATP site. Gly-195 is a binding site for substrate.

Belongs to the Thz kinase family. Requires Mg(2+) as cofactor.

It carries out the reaction 5-(2-hydroxyethyl)-4-methylthiazole + ATP = 4-methyl-5-(2-phosphooxyethyl)-thiazole + ADP + H(+). It participates in cofactor biosynthesis; thiamine diphosphate biosynthesis; 4-methyl-5-(2-phosphoethyl)-thiazole from 5-(2-hydroxyethyl)-4-methylthiazole: step 1/1. Functionally, catalyzes the phosphorylation of the hydroxyl group of 4-methyl-5-beta-hydroxyethylthiazole (THZ). The chain is Hydroxyethylthiazole kinase 2 from Clostridium botulinum (strain 657 / Type Ba4).